Here is a 332-residue protein sequence, read N- to C-terminus: Anthranilate phosphoribosyltransferase (332 aa).

5-phospho-alpha-D-ribose 1-diphosphate contacts are provided by residues Gly78, 81–82 (GD), Ser86, 88–91 (NIST), 106–114 (KHGNKSITS), and Ser118. Gly78 provides a ligand contact to anthranilate. Ser90 contributes to the Mg(2+) binding site. An anthranilate-binding site is contributed by Asn109. An anthranilate-binding site is contributed by Arg163. Mg(2+)-binding residues include Asp222 and Glu223.

Belongs to the anthranilate phosphoribosyltransferase family. As to quaternary structure, homodimer. The cofactor is Mg(2+).

It carries out the reaction N-(5-phospho-beta-D-ribosyl)anthranilate + diphosphate = 5-phospho-alpha-D-ribose 1-diphosphate + anthranilate. Its pathway is amino-acid biosynthesis; L-tryptophan biosynthesis; L-tryptophan from chorismate: step 2/5. Catalyzes the transfer of the phosphoribosyl group of 5-phosphorylribose-1-pyrophosphate (PRPP) to anthranilate to yield N-(5'-phosphoribosyl)-anthranilate (PRA). This Staphylococcus aureus (strain USA300) protein is Anthranilate phosphoribosyltransferase.